We begin with the raw amino-acid sequence, 544 residues long: Tyrosine-protein kinase Yes (544 aa).

Glycine 2 is lipidated: N-myristoyl glycine. An SH3 domain is found at 92–153 (GGVTFFVALY…PSNYVAPADS (62 aa)). The region spanning 159–256 (WYFGKLSRKD…GLCYKLTTVC (98 aa)) is the SH2 domain. Positions 278 to 531 (LRLDVRLGQG…YIQSFLEDYF (254 aa)) constitute a Protein kinase domain. ATP-binding positions include 284 to 292 (LGQGCFGEV) and lysine 306. Aspartate 397 serves as the catalytic Proton acceptor. Phosphotyrosine; by autocatalysis is present on tyrosine 427.

Belongs to the protein kinase superfamily. Tyr protein kinase family. SRC subfamily.

It carries out the reaction L-tyrosyl-[protein] + ATP = O-phospho-L-tyrosyl-[protein] + ADP + H(+). This is Tyrosine-protein kinase Yes (yes) from Xiphophorus hellerii (Green swordtail).